A 127-amino-acid polypeptide reads, in one-letter code: Small ribosomal subunit protein uS11 (127 aa).

This sequence belongs to the universal ribosomal protein uS11 family. In terms of assembly, part of the 30S ribosomal subunit.

Located on the platform of the 30S subunit. The polypeptide is Small ribosomal subunit protein uS11 (Natronomonas pharaonis (strain ATCC 35678 / DSM 2160 / CIP 103997 / JCM 8858 / NBRC 14720 / NCIMB 2260 / Gabara) (Halobacterium pharaonis)).